The primary structure comprises 432 residues: Enolase (432 aa).

Q167 contributes to the (2R)-2-phosphoglycerate binding site. The active-site Proton donor is E209. Mg(2+) contacts are provided by D246, E289, and D316. Residues K341, R370, S371, and K392 each contribute to the (2R)-2-phosphoglycerate site. The active-site Proton acceptor is K341.

Belongs to the enolase family. The cofactor is Mg(2+).

It localises to the cytoplasm. The protein localises to the secreted. Its subcellular location is the cell surface. The catalysed reaction is (2R)-2-phosphoglycerate = phosphoenolpyruvate + H2O. It functions in the pathway carbohydrate degradation; glycolysis; pyruvate from D-glyceraldehyde 3-phosphate: step 4/5. Functionally, catalyzes the reversible conversion of 2-phosphoglycerate (2-PG) into phosphoenolpyruvate (PEP). It is essential for the degradation of carbohydrates via glycolysis. The chain is Enolase from Thermotoga neapolitana (strain ATCC 49049 / DSM 4359 / NBRC 107923 / NS-E).